The following is a 55-amino-acid chain: Large ribosomal subunit protein bL33 (55 aa).

It belongs to the bacterial ribosomal protein bL33 family.

The chain is Large ribosomal subunit protein bL33 from Agrobacterium fabrum (strain C58 / ATCC 33970) (Agrobacterium tumefaciens (strain C58)).